A 182-amino-acid chain; its full sequence is NADH-quinone oxidoreductase subunit 9 (182 aa).

2 4Fe-4S ferredoxin-type domains span residues 43–73 (LTRHPNGLEKCIGCSLCAAACPAYAIYVEPA) and 89–118 (KVYEINMLRCIFCGLCEEACPTGAIVLGYD). [4Fe-4S] cluster is bound by residues cysteine 53, cysteine 56, serine 57, cysteine 59, cysteine 63, cysteine 98, isoleucine 99, cysteine 101, cysteine 104, and cysteine 108.

The protein belongs to the complex I 23 kDa subunit family. In terms of assembly, NDH-1 is composed of 15 different subunits, Nqo1 to Nqo15. The complex has a L-shaped structure, with the hydrophobic arm (subunits Nqo7, Nqo8 and Nqo10 to Nqo14) embedded in the membrane and the hydrophilic peripheral arm (subunits Nqo1 to Nqo6, Nqo9 and Nqo15) protruding into the bacterial cytoplasm. The hydrophilic domain contains all the redox centers. [4Fe-4S] cluster is required as a cofactor.

The protein localises to the cell membrane. The enzyme catalyses a quinone + NADH + 5 H(+)(in) = a quinol + NAD(+) + 4 H(+)(out). Its function is as follows. NDH-1 shuttles electrons from NADH, via FMN and iron-sulfur (Fe-S) centers, to quinones in the respiratory chain. The immediate electron acceptor for the enzyme in this species is menaquinone. Couples the redox reaction to proton translocation (for every two electrons transferred, four hydrogen ions are translocated across the cytoplasmic membrane), and thus conserves the redox energy in a proton gradient required for the synthesis of ATP. The role of the Nqo9 subunit appears to provide a 'connecting chain' of two clusters between cluster N5 and the terminal cluster N2, and to stabilize the structure of the complex by interacting with other subunits. The sequence is that of NADH-quinone oxidoreductase subunit 9 (nqo9) from Thermus thermophilus (strain ATCC 27634 / DSM 579 / HB8).